The sequence spans 666 residues: Probable potassium transport system protein Kup (666 aa).

The next 12 membrane-spanning stretches (helical) occupy residues 16 to 36 (GFII…LYTM), 58 to 78 (ISLI…LVAL), 99 to 119 (TPWL…DGAL), 141 to 161 (IFQN…LLFA), 167 to 187 (TGVI…FLGI), 221 to 241 (IFIL…YSDL), 253 to 273 (WPFV…WILA), 292 to 312 (FTMH…QALI), 343 to 363 (TYIP…VLLF), 373 to 393 (YGLA…FFLI), 402 to 422 (VLLM…ASAV), and 424 to 444 (FMHG…IMTI).

This sequence belongs to the HAK/KUP transporter (TC 2.A.72) family.

The protein localises to the cell membrane. The catalysed reaction is K(+)(in) + H(+)(in) = K(+)(out) + H(+)(out). In terms of biological role, transport of potassium into the cell. Likely operates as a K(+):H(+) symporter. The polypeptide is Probable potassium transport system protein Kup (Streptococcus agalactiae serotype V (strain ATCC BAA-611 / 2603 V/R)).